The following is a 602-amino-acid chain: DEAD-box ATP-dependent RNA helicase 52A (602 aa).

The interval 9–31 is disordered; it reads KSVEAGGEPGGGGGGAWSTVSRS. Residues 15–24 show a composition bias toward gly residues; the sequence is GEPGGGGGGA. The Q motif signature appears at 84-112; it reads DGFEAAGLVEAVLRNVARCGYESPTPVQR. The 191-residue stretch at 115 to 305 folds into the Helicase ATP-binding domain; the sequence is MPIALAGRDL…SDFLSNYIFI (191 aa). Residue 128–135 participates in ATP binding; the sequence is AQTGSGKT. Residues 249-252 carry the DEAD box motif; sequence DEAD. A Helicase C-terminal domain is found at 328–485; it reads EKRGYLLDLL…DVPDWLVQYA (158 aa). Disordered regions lie at residues 492–521 and 552–602; these read GSSY…SGGG and RGGG…SGWD. Residues 552 to 574 show a composition bias toward gly residues; it reads RGGGYSRGGRGGYSGGGGGGGGD.

Belongs to the DEAD box helicase family. DDX3/DED1 subfamily.

It carries out the reaction ATP + H2O = ADP + phosphate + H(+). The polypeptide is DEAD-box ATP-dependent RNA helicase 52A (Oryza sativa subsp. japonica (Rice)).